Reading from the N-terminus, the 62-residue chain is Photosystem II reaction center protein Z (62 aa).

2 helical membrane-spanning segments follow: residues 8-28 and 41-61; these read AVFALIATSSILLISVPVVFA and FSGTSLWITLVFLVGILNSLI.

This sequence belongs to the PsbZ family. PSII is composed of 1 copy each of membrane proteins PsbA, PsbB, PsbC, PsbD, PsbE, PsbF, PsbH, PsbI, PsbJ, PsbK, PsbL, PsbM, PsbT, PsbY, PsbZ, Psb30/Ycf12, at least 3 peripheral proteins of the oxygen-evolving complex and a large number of cofactors. It forms dimeric complexes.

Its subcellular location is the plastid. The protein resides in the chloroplast thylakoid membrane. In terms of biological role, may control the interaction of photosystem II (PSII) cores with the light-harvesting antenna, regulates electron flow through the 2 photosystem reaction centers. PSII is a light-driven water plastoquinone oxidoreductase, using light energy to abstract electrons from H(2)O, generating a proton gradient subsequently used for ATP formation. The chain is Photosystem II reaction center protein Z from Morus indica (Mulberry).